The following is a 405-amino-acid chain: MDKSKENCIAGPVKTAIALGDGPKRVLVTQQVPSQNPLSANSGQAQRVLCPSNSSQRVPPQTQKLVSSHKPAQNLKQKQLQATGVPRPASRSLNNTQKSEQPSSSAPGNNSEKELATKQKNEESKKRQWALEDFEIGRPLGKGKFGNVYLAREKQSKFILAIKVLFKAQLEKAGVEHQLRREVEIQSHLRHPNILRLYGYFHDATRVYLILEYAPLGAVYRELQKLSKFDEQRTATYITELADALSYCHSKRVIHRDIKPENLLLGSAGELKIADFGWSVHAPSSRRTTLCGTLDYLPPEMIEGRMHDEKVDLWSLGVLCYEFLVGKPPFEASTYQETYKRISRVEFTFPDFVPEGARDLISRLLKHNPSQRPTLKDVLEHPWIMANSSKPSSSQKSKDSTSKQS.

Composition is skewed to polar residues over residues 32–82 (VPSQ…QLQA) and 91–110 (RSLNNTQKSEQPSSSAPGNN). The tract at residues 32-127 (VPSQNPLSAN…KQKNEESKKR (96 aa)) is disordered. Phosphoserine occurs at positions 42 and 52. The span at 111-127 (SEKELATKQKNEESKKR) shows a compositional bias: basic and acidic residues. Residues 134–384 (FEIGRPLGKG…LKDVLEHPWI (251 aa)) form the Protein kinase domain. Residues Lys-144, Lys-163, and 212–214 (EYA) contribute to the ATP site. Asp-257 serves as the catalytic Proton acceptor. Residue Lys-259 forms a Glycyl lysine isopeptide (Lys-Gly) (interchain with G-Cter in SUMO2) linkage. ATP-binding positions include 261–262 (EN) and Asp-275. An activation segment region spans residues 281–294 (HAPSSRRTTLCGTL). A phosphothreonine mark is found at Thr-288 and Thr-289. Ser-343 carries the post-translational modification Phosphoserine. Residues 385–405 (MANSSKPSSSQKSKDSTSKQS) are disordered. Positions 396-405 (KSKDSTSKQS) are enriched in basic and acidic residues.

The protein belongs to the protein kinase superfamily. Ser/Thr protein kinase family. Aurora subfamily. Part of a complex composed of NEDD9, AURKA and CTTN; within the complex NEDD9 acts as a scaffold protein and is required for complex formation. Identified in a complex with AUNIP and NIN. Interacts with FBXL7. Interacts with CPEB1, JTB, TACC1, TPX2, PPP2CA, as well as with the protein phosphatase type 1 (PP1) isoforms PPP1CA, PPP1CB and PPP1CC. Also interacts with its substrates ARHGEF2, BORA, KIF2A, PARD3, and p53/TP53. Interaction with BORA promotes phosphorylation of PLK1. Interacts with CIMAP3. Interacts with GADD45A, competing with its oligomerization. Interacts (via C-terminus) with AUNIP (via C-terminus). Interacts with FRY; this interaction facilitates AURKA-mediated PLK1 phosphorylation. Interacts with SIRT2. Interacts with MYCN; interaction is phospho-independent and triggers AURKA activation; AURKA competes with FBXW7 for binding to unphosphorylated MYCN but not for binding to phosphorylated MYCN. Interacts with HNRNPU. Interacts with AAAS. Interacts with KLHL18 and CUL3. Interacts with FOXP1. Interacts with HDAC6; AURKA-mediated phosphorylation of HDAC6 promotes deacetylation of alpha-tubulin. In terms of processing, activated by phosphorylation at Thr-289; this brings about a change in the conformation of the activation segment. Phosphorylation at Thr-289 varies during the cell cycle and is highest during M phase. Autophosphorylated at Thr-289 upon TPX2 binding. Thr-289 can be phosphorylated by several kinases, including PAK and PKA. Protein phosphatase type 1 (PP1) binds AURKA and inhibits its activity by dephosphorylating Thr-289 during mitosis. Phosphorylation at Ser-343 decreases the kinase activity. PPP2CA controls degradation by dephosphorylating Ser-52 at the end of mitosis. Ubiquitinated by the E3 ubiquitin-protein ligase complex SCF(FBXL7) during mitosis, leading to its degradation by the proteasome. Ubiquitinated by CHFR, leading to its degradation by the proteasome. Ubiquitinated by the anaphase-promoting complex (APC), leading to its degradation by the proteasome. Ubiquitinated by the CUL3-KLHL18 ligase leading to its activation at the centrosome which is required for initiating mitotic entry. Ubiquitination mediated by CUL3-KLHL18 ligase does not lead to its degradation by the proteasome.

The protein localises to the cytoplasm. The protein resides in the cytoskeleton. It localises to the microtubule organizing center. It is found in the centrosome. Its subcellular location is the spindle pole. The protein localises to the centriole. The protein resides in the cell projection. It localises to the neuron projection. It is found in the cilium. Its subcellular location is the cilium basal body. The protein localises to the basolateral cell membrane. The enzyme catalyses L-seryl-[protein] + ATP = O-phospho-L-seryl-[protein] + ADP + H(+). It carries out the reaction L-threonyl-[protein] + ATP = O-phospho-L-threonyl-[protein] + ADP + H(+). Activation of CDK1, appears to be an upstream event of AURKA activation. Phosphatase inhibitor-2 (PPP1R2) and TPX2 act also as activators. Inactivated by the G2 checkpoint. Inhibited by GADD45A and p53/TP53, and through dephosphorylation by protein phosphatase type 1 (PP1). MLN8054 is also a potent and selective inhibitor. Activated during the early phase of cilia disassembly in the presence of CIMAP3. Inhibited by the small molecule inhibitor VX-680. Its function is as follows. Mitotic serine/threonine kinase that contributes to the regulation of cell cycle progression. Associates with the centrosome and the spindle microtubules during mitosis and plays a critical role in various mitotic events including the establishment of mitotic spindle, centrosome duplication, centrosome separation as well as maturation, chromosomal alignment, spindle assembly checkpoint, and cytokinesis. Required for normal spindle positioning during mitosis and for the localization of NUMA1 and DCTN1 to the cell cortex during metaphase. Required for initial activation of CDK1 at centrosomes. Phosphorylates numerous target proteins, including ARHGEF2, BORA, BRCA1, CDC25B, DLGP5, HDAC6, KIF2A, LATS2, NDEL1, PARD3, PPP1R2, PLK1, RASSF1, TACC3, p53/TP53 and TPX2. Phosphorylates MCRS1 which is required for MCRS1-mediated kinetochore fiber assembly and mitotic progression. Regulates KIF2A tubulin depolymerase activity. Important for microtubule formation and/or stabilization. Required for normal axon formation. Plays a role in microtubule remodeling during neurite extension. Also acts as a key regulatory component of the p53/TP53 pathway, and particularly the checkpoint-response pathways critical for oncogenic transformation of cells, by phosphorylating and destabilizing p53/TP53. Phosphorylates its own inhibitors, the protein phosphatase type 1 (PP1) isoforms, to inhibit their activity. Inhibits cilia outgrowth. Required for cilia disassembly via phosphorylation of HDAC6 and subsequent deacetylation of alpha-tubulin. Regulates protein levels of the anti-apoptosis protein BIRC5 by suppressing the expression of the SCF(FBXL7) E3 ubiquitin-protein ligase substrate adapter FBXL7 through the phosphorylation of the transcription factor FOXP1. The sequence is that of Aurora kinase A from Canis lupus familiaris (Dog).